We begin with the raw amino-acid sequence, 216 residues long: Imidazole glycerol phosphate synthase subunit HisH (216 aa).

A Glutamine amidotransferase type-1 domain is found at 2-216; that stretch reads RVAIIDYGSG…LITNFLRWRP (215 aa). Cysteine 88 acts as the Nucleophile in catalysis. Active-site residues include histidine 196 and glutamate 198.

As to quaternary structure, heterodimer of HisH and HisF.

The protein localises to the cytoplasm. It carries out the reaction 5-[(5-phospho-1-deoxy-D-ribulos-1-ylimino)methylamino]-1-(5-phospho-beta-D-ribosyl)imidazole-4-carboxamide + L-glutamine = D-erythro-1-(imidazol-4-yl)glycerol 3-phosphate + 5-amino-1-(5-phospho-beta-D-ribosyl)imidazole-4-carboxamide + L-glutamate + H(+). It catalyses the reaction L-glutamine + H2O = L-glutamate + NH4(+). It participates in amino-acid biosynthesis; L-histidine biosynthesis; L-histidine from 5-phospho-alpha-D-ribose 1-diphosphate: step 5/9. Functionally, IGPS catalyzes the conversion of PRFAR and glutamine to IGP, AICAR and glutamate. The HisH subunit catalyzes the hydrolysis of glutamine to glutamate and ammonia as part of the synthesis of IGP and AICAR. The resulting ammonia molecule is channeled to the active site of HisF. The sequence is that of Imidazole glycerol phosphate synthase subunit HisH from Mesorhizobium japonicum (strain LMG 29417 / CECT 9101 / MAFF 303099) (Mesorhizobium loti (strain MAFF 303099)).